Consider the following 90-residue polypeptide: MRRSVLVVFLVLAVTNVAVEAISRRGSFLAGGLLGLGLGAAASRGFGFPGYYGGYYGGGYYPMGGYYPMGGYYPMGGFYPSYHTFGGYYG.

The signal sequence occupies residues 1–21; it reads MRRSVLVVFLVLAVTNVAVEA.

As to expression, prismatic layer of shell (at protein level).

It localises to the secreted. In Pinctada maxima (Silver-lipped pearl oyster), this protein is Glycine and tyrosine-rich protein.